A 333-amino-acid chain; its full sequence is uncharacterized protein (333 aa).

The interval 234–333 (PPLAPTSAPA…GLSSEFDSDD (100 aa)) is disordered. A compositionally biased stretch (pro residues) spans 251–265 (VPPPVPAPPTPPPQE). Residues 324–333 (GLSSEFDSDD) show a composition bias toward polar residues.

Its subcellular location is the cell projection. It localises to the cilium. The protein resides in the flagellum. This is an uncharacterized protein from Homo sapiens (Human).